The primary structure comprises 864 residues: Leucine--tRNA ligase (864 aa).

The short motif at 40-51 (PYPSGAGLHVGH) is the 'HIGH' region element. A 'KMSKS' region motif is present at residues 636–640 (KMSKS). Lys639 is an ATP binding site.

Belongs to the class-I aminoacyl-tRNA synthetase family.

It is found in the cytoplasm. It catalyses the reaction tRNA(Leu) + L-leucine + ATP = L-leucyl-tRNA(Leu) + AMP + diphosphate. In Leptospira borgpetersenii serovar Hardjo-bovis (strain JB197), this protein is Leucine--tRNA ligase.